A 525-amino-acid polypeptide reads, in one-letter code: Cysteine--tRNA ligase (525 aa).

Cys-49 contacts Zn(2+). The 'HIGH' region motif lies at 51–61 (VTVYDLCHLGH). Zn(2+) is bound by residues Cys-258, His-283, and Glu-287. The short motif at 315–319 (KMSKS) is the 'KMSKS' region element. An ATP-binding site is contributed by Lys-318.

Belongs to the class-I aminoacyl-tRNA synthetase family. In terms of assembly, monomer. Zn(2+) serves as cofactor.

The protein resides in the cytoplasm. The catalysed reaction is tRNA(Cys) + L-cysteine + ATP = L-cysteinyl-tRNA(Cys) + AMP + diphosphate. The chain is Cysteine--tRNA ligase from Synechococcus sp. (strain JA-2-3B'a(2-13)) (Cyanobacteria bacterium Yellowstone B-Prime).